The primary structure comprises 428 residues: Serine--tRNA ligase (428 aa).

L-serine is bound at residue 235–237 (TAE). Position 266-268 (266-268 (RSE)) interacts with ATP. E289 lines the L-serine pocket. Position 353–356 (353–356 (EISS)) interacts with ATP. Residue S389 coordinates L-serine.

Belongs to the class-II aminoacyl-tRNA synthetase family. Type-1 seryl-tRNA synthetase subfamily. As to quaternary structure, homodimer. The tRNA molecule binds across the dimer.

The protein resides in the cytoplasm. The enzyme catalyses tRNA(Ser) + L-serine + ATP = L-seryl-tRNA(Ser) + AMP + diphosphate + H(+). It carries out the reaction tRNA(Sec) + L-serine + ATP = L-seryl-tRNA(Sec) + AMP + diphosphate + H(+). The protein operates within aminoacyl-tRNA biosynthesis; selenocysteinyl-tRNA(Sec) biosynthesis; L-seryl-tRNA(Sec) from L-serine and tRNA(Sec): step 1/1. In terms of biological role, catalyzes the attachment of serine to tRNA(Ser). Is also able to aminoacylate tRNA(Sec) with serine, to form the misacylated tRNA L-seryl-tRNA(Sec), which will be further converted into selenocysteinyl-tRNA(Sec). This is Serine--tRNA ligase from Pasteurella multocida (strain Pm70).